Here is a 391-residue protein sequence, read N- to C-terminus: cAMP-dependent protein kinase regulatory subunit (391 aa).

The interval 1-84 is disordered; it reads MFKSPFGANA…PPNPESYPAQ (84 aa). The dimerization and phosphorylation stretch occupies residues 1-131; sequence MFKSPFGANA…RLKTAIAGNF (131 aa). Polar residues predominate over residues 38–55; that stretch reads TVTSPTSPNFGMNAQSMF. Position 92 is a phosphoserine (Ser92). Residues 132–261, Glu210, Arg219, 264–381, Glu331, and Arg340 contribute to the 3',5'-cyclic AMP site; these read LFSH…FLRE and LLQT…DIKT.

It belongs to the cAMP-dependent kinase regulatory chain family. In terms of assembly, tetramer, composed of 2 regulatory (R) and 2 catalytic (C) subunits. In the presence of cAMP it dissociates into 2 active monomeric C subunits and an R dimer.

This is cAMP-dependent protein kinase regulatory subunit (PKAR) from Colletotrichum orbiculare (strain 104-T / ATCC 96160 / CBS 514.97 / LARS 414 / MAFF 240422) (Cucumber anthracnose fungus).